A 497-amino-acid polypeptide reads, in one-letter code: MEKKYILALDQGTTSSRAMIIDEEGEVIGVAQEEFDQIFPKPGWVEHNANEIWASILAVIAGVLLKTNISSKEIAGIGITNQRETTVIWDKESGNPIYNAIVWQSRQTEDICKQLRKDGYEDTIRSKTGLLIDPYFAGTKARWILDHVDGAQERAEKGELLFGTIDTWLVWKLTGGRAHITDYSNASRTLLYNIYDLEWDDELLKMLNIPKAMLPEVRPSSEVYADTVPYHFFGEEVPVAGIAGDQQAALFGQGCFEKGMAKNTYGTGCFLLMNTGEKAVRSENGLLTTLAWGIDGKVEYALEGSIFVAGSAIQWLRDGLRMVRQSSDSENYASRIESSDGVYVVPAFVGLGAPYWDSDVRGAVFGLTRGTEKEQFIRATLESLAYQTRDVLYAMEQDSGISLKTLRVDGGASANNFLMQFQSDILGVPVERPENKETTVLGAAFLAGLAVGVWKDKNEIKKHWKLDKRFEVEMKDEQREDLYEGWHKAVKAAQAFK.

T13 is an ADP binding site. T13, T14, and S15 together coordinate ATP. T13 is a binding site for sn-glycerol 3-phosphate. R17 serves as a coordination point for ADP. The sn-glycerol 3-phosphate site is built by R83, E84, and Y135. Positions 83, 84, and 135 each coordinate glycerol. H231 carries the post-translational modification Phosphohistidine; by HPr. A sn-glycerol 3-phosphate-binding site is contributed by D245. 2 residues coordinate glycerol: D245 and Q246. Residues T267 and G310 each coordinate ADP. 4 residues coordinate ATP: T267, G310, Q314, and G411. Residues G411 and N415 each coordinate ADP.

This sequence belongs to the FGGY kinase family. Homotetramer and homodimer (in equilibrium). Post-translationally, the phosphoenolpyruvate-dependent sugar phosphotransferase system (PTS), including enzyme I, and histidine-containing protein (HPr) are required for the phosphorylation, which leads to the activation of the enzyme.

The catalysed reaction is glycerol + ATP = sn-glycerol 3-phosphate + ADP + H(+). It functions in the pathway polyol metabolism; glycerol degradation via glycerol kinase pathway; sn-glycerol 3-phosphate from glycerol: step 1/1. Activated by phosphorylation and inhibited by fructose 1,6-bisphosphate (FBP). Key enzyme in the regulation of glycerol uptake and metabolism. Catalyzes the phosphorylation of glycerol to yield sn-glycerol 3-phosphate. The chain is Glycerol kinase from Listeria monocytogenes serotype 4b (strain F2365).